Here is a 254-residue protein sequence, read N- to C-terminus: uncharacterized protein (254 aa).

Positions 66-111 form a coiled coil; sequence DMVSEMNKRMDDLAARIVVLEDEKAELRRINQRLTEKVRDKDMEKA.

This is an uncharacterized protein from Ostreid herpesvirus 1 (isolate France) (OsHV-1).